Reading from the N-terminus, the 145-residue chain is uncharacterized protein (145 aa).

A disordered region spans residues 1 to 25 (MSENNENDGFNLDPDVKEELEETKS). Residues 14–25 (PDVKEELEETKS) are compositionally biased toward basic and acidic residues.

This is an uncharacterized protein from His1 virus (isolate Australia/Victoria) (His1V).